Consider the following 283-residue polypeptide: Acetylglutamate kinase (283 aa).

Substrate contacts are provided by residues 64–65 (GG), R86, and N178.

The protein belongs to the acetylglutamate kinase family. ArgB subfamily.

It is found in the cytoplasm. The enzyme catalyses N-acetyl-L-glutamate + ATP = N-acetyl-L-glutamyl 5-phosphate + ADP. Its pathway is amino-acid biosynthesis; L-arginine biosynthesis; N(2)-acetyl-L-ornithine from L-glutamate: step 2/4. Catalyzes the ATP-dependent phosphorylation of N-acetyl-L-glutamate. The polypeptide is Acetylglutamate kinase (Lactococcus lactis subsp. cremoris (strain MG1363)).